The chain runs to 816 residues: Larval serum protein 1 alpha chain (816 aa).

Residues 1-16 form the signal peptide; it reads MKFAIAFLACVAVVTA.

It belongs to the hemocyanin family. In terms of assembly, heterohexamer, composed of three subunits, alpha, beta and gamma. Larval hemolymph.

It localises to the secreted. The protein localises to the extracellular space. Larval storage protein (LSP) which may serve as a store of amino acids for synthesis of adult proteins. This is Larval serum protein 1 alpha chain (Lsp1alpha) from Drosophila melanogaster (Fruit fly).